The primary structure comprises 450 residues: Succinate-semialdehyde dehydrogenase (450 aa).

119 to 120 (WN) contributes to the NADP(+) binding site. Arginine 128 contributes to the substrate binding site. NADP(+) contacts are provided by residues 143 to 146 (KPAK) and 197 to 198 (GS). Residue glutamate 219 is the Proton acceptor of the active site. Position 220 (leucine 220) interacts with NADP(+). Arginine 247 and cysteine 253 together coordinate substrate. The active-site Nucleophile is cysteine 253. Glutamate 350 contacts NADP(+). Substrate is bound at residue serine 410.

The protein belongs to the aldehyde dehydrogenase family. Homodimer.

It carries out the reaction succinate semialdehyde + NAD(+) + H2O = succinate + NADH + 2 H(+). The catalysed reaction is succinate semialdehyde + NADP(+) + H2O = succinate + NADPH + 2 H(+). The protein operates within alkaloid degradation; nicotine degradation. Its function is as follows. Catalyzes the NAD(P)(+)-dependent oxidation of succinate semialdehyde to succinate, which may enter the citric acid cycle. Is involved in the catabolism of 4-methylaminobutanoate produced from nicotine. Acts preferentially with NADP(+) as cosubstrate but can also use NAD(+). To a lesser extent, is active also towards butyraldehyde (8.5% of the activity observed with succinate semialdehyde) and propionaldehyde (1.6% of the activity observed with succinate semialdehyde) as substrates. The protein is Succinate-semialdehyde dehydrogenase (sad) of Paenarthrobacter nicotinovorans (Arthrobacter nicotinovorans).